The primary structure comprises 80 residues: Large ribosomal subunit protein bL31B (80 aa).

This sequence belongs to the bacterial ribosomal protein bL31 family. Type B subfamily. Part of the 50S ribosomal subunit.

The chain is Large ribosomal subunit protein bL31B from Streptococcus mutans serotype c (strain ATCC 700610 / UA159).